Here is a 248-residue protein sequence, read N- to C-terminus: Probable S-methyl-5'-thioinosine phosphorylase (248 aa).

Phosphate-binding positions include Thr-12 and 54–55; that span reads RH. Met-187 contacts substrate. Residue Thr-188 coordinates phosphate. Residue 211 to 213 participates in substrate binding; sequence NWA.

Belongs to the PNP/MTAP phosphorylase family. MTAP subfamily. Homotrimer.

The enzyme catalyses S-methyl-5'-thioinosine + phosphate = 5-(methylsulfanyl)-alpha-D-ribose 1-phosphate + hypoxanthine. It participates in purine metabolism; purine nucleoside salvage. Its function is as follows. Catalyzes the reversible phosphorylation of S-methyl-5'-thioinosine (MTI) to hypoxanthine and 5-methylthioribose-1-phosphate. Involved in the breakdown of S-methyl-5'-thioadenosine (MTA), a major by-product of polyamine biosynthesis. Catabolism of (MTA) occurs via deamination to MTI and phosphorolysis to hypoxanthine. This is Probable S-methyl-5'-thioinosine phosphorylase from Xylella fastidiosa (strain Temecula1 / ATCC 700964).